The following is a 307-amino-acid chain: Transposase InsD for insertion element IS2-9 (307 aa).

The Integrase catalytic domain occupies 112-295; that stretch reads KPAVPPSKRA…SPREYLRQRA (184 aa).

Functionally, involved in the transposition of the insertion sequence IS2. The polypeptide is Transposase InsD for insertion element IS2-9 (Escherichia coli (strain K12)).